Here is a 369-residue protein sequence, read N- to C-terminus: tRNA-specific 2-thiouridylase MnmA (369 aa).

ATP is bound by residues 11 to 18 and methionine 37; that span reads GMSGGVDS. The tract at residues 97 to 99 is interaction with target base in tRNA; it reads NPD. Catalysis depends on cysteine 102, which acts as the Nucleophile. The cysteines at positions 102 and 199 are disulfide-linked. An ATP-binding site is contributed by glycine 127. An interaction with tRNA region spans residues 149–151; that stretch reads KDQ. Catalysis depends on cysteine 199, which acts as the Cysteine persulfide intermediate. Residues 311–312 are interaction with tRNA; that stretch reads RY.

It belongs to the MnmA/TRMU family. Interacts with TusE.

The protein localises to the cytoplasm. The catalysed reaction is S-sulfanyl-L-cysteinyl-[protein] + uridine(34) in tRNA + AH2 + ATP = 2-thiouridine(34) in tRNA + L-cysteinyl-[protein] + A + AMP + diphosphate + H(+). Catalyzes the 2-thiolation of uridine at the wobble position (U34) of tRNA(Lys), tRNA(Glu) and tRNA(Gln), leading to the formation of s(2)U34, the first step of tRNA-mnm(5)s(2)U34 synthesis. Sulfur is provided by IscS, via a sulfur-relay system. Binds ATP and its substrate tRNAs. This chain is tRNA-specific 2-thiouridylase MnmA, found in Enterobacter sp. (strain 638).